The primary structure comprises 82 residues: MNAKTLFVVFLIGMLVTEQVEAGIWSSIKNLASKAWNSDIGQSLRNKAAGAINKFVADKIGVTPSQAASMTLDEIVDAMYYD.

The signal sequence occupies residues 1 to 22 (MNAKTLFVVFLIGMLVTEQVEA). Residues 70–82 (MTLDEIVDAMYYD) constitute a propeptide that is removed on maturation.

It belongs to the non-disulfide-bridged peptide (NDBP) superfamily. Long chain multifunctional peptide (group 2) family. Expressed by the venom gland.

It is found in the secreted. It localises to the target cell membrane. In terms of biological role, displays significant potent antimicrobial activity against clinical isolates of Gram-negative multidrug resistant strains of E.coli, P.aeruginosa and A.baumanii with MIC values as low as 4.4 uM. Additionally, it displays low cytolytic and hemolytic activity against human erythrocytes reaching 50% hemolysis at 100 uM. The sequence is that of Vejovine from Vaejovis mexicanus (Mexican scorpion).